Consider the following 702-residue polypeptide: Kinesin-like protein KIF3A (702 aa).

The 332-residue stretch at 14-345 (NVKVVVRCRP…LRYANRAKNI (332 aa)) folds into the Kinesin motor domain. Residue 100-107 (GQTGTGKT) coordinates ATP. Residues 355–593 (PKDALLRQFQ…LSRELRLQML (239 aa)) are a coiled coil. Disordered regions lie at residues 372–424 (KKLE…KMIE) and 667–702 (LMKL…SLLQ). Acidic residues predominate over residues 376–400 (EGEEISGSDISGSEEDDDEEGEIGE). The segment covering 410 to 424 (DQAGKKKVSPDKMIE) has biased composition (basic and acidic residues). Positions 600 to 702 (PRDYQEMIEN…PETVIDSLLQ (103 aa)) are globular. Over residues 675-690 (TSKGKARPKTGRRKRS) the composition is skewed to basic residues. A Phosphoserine modification is found at Ser690.

It belongs to the TRAFAC class myosin-kinesin ATPase superfamily. Kinesin family. Kinesin II subfamily. In terms of assembly, heterodimer of KIF3A and KIF3B. Interacts with CIMAP3. Interacts with CLN3. Interacts with DCTN1. Interacts with FLCN. Interacts with AP3B1.

The protein resides in the cytoplasm. The protein localises to the cytoskeleton. Its subcellular location is the cell projection. It is found in the cilium. It localises to the microtubule organizing center. The protein resides in the centrosome. The protein localises to the centriole. Its function is as follows. Microtubule-based anterograde translocator for membranous organelles. Plus end-directed microtubule sliding activity in vitro. Plays a role in primary cilia formation. Plays a role in centriole cohesion and subdistal appendage organization and function. Regulates the formation of the subdistal appendage via recruitment of DCTN1 to the centriole. Also required for ciliary basal feet formation and microtubule anchoring to mother centriole. The chain is Kinesin-like protein KIF3A (KIF3A) from Pongo abelii (Sumatran orangutan).